Here is a 687-residue protein sequence, read N- to C-terminus: Cytochrome b/c1 (687 aa).

The chain crosses the membrane as a helical span at residues 46-66 (FGAILSFMLGMQILTGVILAM). Positions 96 and 110 each coordinate heme b. 2 helical membrane passes run 126 to 146 (VLWI…FMGY) and 160 to 180 (VITN…TLLW). Residues His197 and His211 each contribute to the heme b site. 6 helical membrane-spanning segments follow: residues 199 to 219 (LLPF…HVAG), 247 to 267 (FGVA…PNYL), 305 to 325 (LAGV…PWLD), 337 to 357 (LAKQ…YLGA), 363 to 383 (IYVI…LIVL), and 410 to 430 (AVAS…GSLQ). The tract at residues 404-434 (LAKGGKAVASVAIALVAAGALFLGSLQDARA) is internal signal sequence. The region spanning 458-643 (GALQRGLKVY…TVAQYSKDVT (186 aa)) is the Cytochrome c domain. 4 residues coordinate heme c: Cys471, Cys474, His475, and Met616. The helical transmembrane segment at 666 to 678 (VFLIIFAGLMYFT) threads the bilayer.

It belongs to the cytochrome b family. In terms of assembly, the main subunits of complex b-c1 are: cytochrome b, cytochrome c1 and the Rieske protein. Requires heme b as cofactor. The cofactor is heme c. In terms of processing, the protein is post-translationally processed into cytochrome b and c1. This occurs by processing between residues 434 and 435 without processing between cytochrome b and the N-terminal of the putative signal sequence domain.

Its subcellular location is the cell inner membrane. Its function is as follows. Component of the ubiquinol-cytochrome c reductase complex (complex III or cytochrome b-c1 complex), which is a respiratory chain that generates an electrochemical potential coupled to ATP synthesis. c1 functions as an electron donor to cytochrome c. This chain is Cytochrome b/c1 (fbcH), found in Bradyrhizobium diazoefficiens (strain JCM 10833 / BCRC 13528 / IAM 13628 / NBRC 14792 / USDA 110).